Reading from the N-terminus, the 717-residue chain is Delta-1-pyrroline-5-carboxylate synthase (717 aa).

The glutamate 5-kinase stretch occupies residues 1 to 296; sequence METVDSTRAF…WASIGETDAR (296 aa). Ser60, Asp157, and Asn176 together coordinate substrate. ATP contacts are provided by residues 196–197 and 236–242; these read SD and RGGMTAK. The tract at residues 297–717 is gamma-glutamyl phosphate reductase; it reads EMAVAARACS…YSHKDLTQQG (421 aa).

The protein in the N-terminal section; belongs to the glutamate 5-kinase family. In the C-terminal section; belongs to the gamma-glutamyl phosphate reductase family. As to expression, expressed at high levels in leaves and is inducible in roots subjected to salt stress.

It catalyses the reaction L-glutamate + ATP = L-glutamyl 5-phosphate + ADP. The enzyme catalyses L-glutamate 5-semialdehyde + phosphate + NADP(+) = L-glutamyl 5-phosphate + NADPH + H(+). The protein operates within amino-acid biosynthesis; L-proline biosynthesis; L-glutamate 5-semialdehyde from L-glutamate: step 1/2. It participates in amino-acid biosynthesis; L-proline biosynthesis; L-glutamate 5-semialdehyde from L-glutamate: step 2/2. With respect to regulation, feedback regulated by proline. Functionally, P5CS plays a key role in proline biosynthesis, leading to osmoregulation in plants. This Solanum lycopersicum (Tomato) protein is Delta-1-pyrroline-5-carboxylate synthase (PRO2).